Reading from the N-terminus, the 247-residue chain is 2,3-bisphosphoglycerate-dependent phosphoglycerate mutase (247 aa).

Residues 8 to 15 (RHGESTWN), 21 to 22 (TG), arginine 60, 87 to 90 (ERHY), lysine 98, 114 to 115 (RR), and 183 to 184 (GN) each bind substrate. The active-site Tele-phosphohistidine intermediate is the histidine 9. The active-site Proton donor/acceptor is glutamate 87.

This sequence belongs to the phosphoglycerate mutase family. BPG-dependent PGAM subfamily. Homodimer.

It carries out the reaction (2R)-2-phosphoglycerate = (2R)-3-phosphoglycerate. Its pathway is carbohydrate degradation; glycolysis; pyruvate from D-glyceraldehyde 3-phosphate: step 3/5. Its function is as follows. Catalyzes the interconversion of 2-phosphoglycerate and 3-phosphoglycerate. This chain is 2,3-bisphosphoglycerate-dependent phosphoglycerate mutase, found in Albidiferax ferrireducens (strain ATCC BAA-621 / DSM 15236 / T118) (Rhodoferax ferrireducens).